Consider the following 156-residue polypeptide: SsrA-binding protein (156 aa).

The protein belongs to the SmpB family.

It is found in the cytoplasm. Functionally, required for rescue of stalled ribosomes mediated by trans-translation. Binds to transfer-messenger RNA (tmRNA), required for stable association of tmRNA with ribosomes. tmRNA and SmpB together mimic tRNA shape, replacing the anticodon stem-loop with SmpB. tmRNA is encoded by the ssrA gene; the 2 termini fold to resemble tRNA(Ala) and it encodes a 'tag peptide', a short internal open reading frame. During trans-translation Ala-aminoacylated tmRNA acts like a tRNA, entering the A-site of stalled ribosomes, displacing the stalled mRNA. The ribosome then switches to translate the ORF on the tmRNA; the nascent peptide is terminated with the 'tag peptide' encoded by the tmRNA and targeted for degradation. The ribosome is freed to recommence translation, which seems to be the essential function of trans-translation. The polypeptide is SsrA-binding protein (Trichodesmium erythraeum (strain IMS101)).